Here is a 306-residue protein sequence, read N- to C-terminus: Phospho-N-acetylmuramoyl-pentapeptide-transferase (306 aa).

Transmembrane regions (helical) follow at residues 2 to 22 (IALLSINFVAFFVFLLILKYW), 47 to 67 (SGTPVMGGIVFILAVFPFLFF), 71 to 91 (FFISLSTILFGLLGLVDDLKL), 105 to 125 (IFLSFIITLILYVFSPHDYKI), 131 to 151 (LIIDSSILYIFLFFIILIAVP), 162 to 182 (GLAGGTSLVTLIFLLVYSFHF), 185 to 205 (IALEISLMITALLAFLWFNSH), 209 to 229 (IFMGDVGAFALGGFIASLSVV), 236 to 256 (LIFLSGIFLIESLSVFIQVFF), and 284 to 304 (IVWRFYIIHLLIIIGGLVLWY).

This sequence belongs to the glycosyltransferase 4 family. MraY subfamily. Requires Mg(2+) as cofactor.

It is found in the cell inner membrane. It carries out the reaction UDP-N-acetyl-alpha-D-muramoyl-L-alanyl-gamma-D-glutamyl-meso-2,6-diaminopimeloyl-D-alanyl-D-alanine + di-trans,octa-cis-undecaprenyl phosphate = di-trans,octa-cis-undecaprenyl diphospho-N-acetyl-alpha-D-muramoyl-L-alanyl-D-glutamyl-meso-2,6-diaminopimeloyl-D-alanyl-D-alanine + UMP. It participates in cell wall biogenesis; peptidoglycan biosynthesis. Catalyzes the initial step of the lipid cycle reactions in the biosynthesis of the cell wall peptidoglycan: transfers peptidoglycan precursor phospho-MurNAc-pentapeptide from UDP-MurNAc-pentapeptide onto the lipid carrier undecaprenyl phosphate, yielding undecaprenyl-pyrophosphoryl-MurNAc-pentapeptide, known as lipid I. This chain is Phospho-N-acetylmuramoyl-pentapeptide-transferase, found in Dictyoglomus thermophilum (strain ATCC 35947 / DSM 3960 / H-6-12).